Reading from the N-terminus, the 214-residue chain is Large ribosomal subunit protein bL25 (214 aa).

Positions 189-214 (IHASRKAKADEDEAAEGEEGEEGAED) are disordered. Acidic residues predominate over residues 198-214 (DEDEAAEGEEGEEGAED).

Belongs to the bacterial ribosomal protein bL25 family. CTC subfamily. In terms of assembly, part of the 50S ribosomal subunit; part of the 5S rRNA/L5/L18/L25 subcomplex. Contacts the 5S rRNA. Binds to the 5S rRNA independently of L5 and L18.

This is one of the proteins that binds to the 5S RNA in the ribosome where it forms part of the central protuberance. In Alkalilimnicola ehrlichii (strain ATCC BAA-1101 / DSM 17681 / MLHE-1), this protein is Large ribosomal subunit protein bL25.